Consider the following 333-residue polypeptide: 4-hydroxyproline epimerase (333 aa).

The active-site Proton acceptor is cysteine 90. Substrate is bound by residues 91–92 and aspartate 249; that span reads GH. The active-site Proton donor is cysteine 253. Position 254–255 (254–255) interacts with substrate; that stretch reads GT.

The protein belongs to the proline racemase family. As to quaternary structure, homodimer.

The enzyme catalyses trans-4-hydroxy-L-proline = cis-4-hydroxy-D-proline. Functionally, allows intracellular utilization of 4-hydroxyproline, one of the major constituents of host collagen, by converting 4-hydroxy-L-proline to 4-hydroxy-D-proline, which can be further metabolized by intracellular 4-hydroxy-D-proline oxidases. Strong B-cell mitogen. Plays an important role in the regulation of intra- and extracellular amino acid pools, allowing the bacterium to profit from host precursors and enzymatic pathways. This is 4-hydroxyproline epimerase from Brucella canis (strain ATCC 23365 / NCTC 10854 / RM-666).